The primary structure comprises 401 residues: MNKHIEQLYRSAKKRSRLIIGLMSGTSLDGLDVALCRIEGHGTDTQIELVAFCTVDYDDGYKQKIKSVFAKRQVDLQQVTLLNPWVGVLHGQMVNQCLEKWNIAATDIDAIASHGQTIYHCPLGQHGQSEFGNATLQIGDADHLAVTTGILTIGDFRQKHIAAGGEGAPLAVYGDYLFFTSKQENRILLNMGGIANLTFLPCSADASAVFSSDIGPGNTIMDAYVQRHFSPLHYDKDSAMASQGKVHLGLLDSLLEHAFFALDFPKTTGPEVFNLDYLSVAQAHSATRQLAHEDVLATLNLFSARTIANAINDAAIELEEFNVYASGGGIHNPLLMEHILRLCPNVTAIQDTSKLGIDPDAKEAVLFAILANECLVGGQQPFGNLEQGIPNITMGKISFPD.

An ATP-binding site is contributed by 25–32 (GTSLDGLD).

This sequence belongs to the anhydro-N-acetylmuramic acid kinase family.

The enzyme catalyses 1,6-anhydro-N-acetyl-beta-muramate + ATP + H2O = N-acetyl-D-muramate 6-phosphate + ADP + H(+). The protein operates within amino-sugar metabolism; 1,6-anhydro-N-acetylmuramate degradation. It participates in cell wall biogenesis; peptidoglycan recycling. Catalyzes the specific phosphorylation of 1,6-anhydro-N-acetylmuramic acid (anhMurNAc) with the simultaneous cleavage of the 1,6-anhydro ring, generating MurNAc-6-P. Is required for the utilization of anhMurNAc either imported from the medium or derived from its own cell wall murein, and thus plays a role in cell wall recycling. In Pseudoalteromonas atlantica (strain T6c / ATCC BAA-1087), this protein is Anhydro-N-acetylmuramic acid kinase.